We begin with the raw amino-acid sequence, 1135 residues long: Integrin alpha-7 (1135 aa).

The N-terminal stretch at 1–33 (MARIPRCDFLGLPGICYLLSFLLAGLLLPRASA) is a signal peptide. Over 34 to 1036 (FNLDVMGAIR…VAVVAEGVPW (1003 aa)) the chain is Extracellular. 7 FG-GAP repeats span residues 38 to 103 (VMGA…ETDC), 110 to 165 (RGAN…RCFV), 185 to 238 (EGRP…DPDQ), 248 to 305 (DRLT…ASRL), 306 to 367 (IPEV…HWAD), 368 to 423 (ISPL…GVVT), and 427 to 486 (QVLE…IDPR). The N-linked (GlcNAc...) asparagine glycan is linked to N86. 3 disulfides stabilise this stretch: C94–C103, C140–C163, and C184–C197. D328, N330, D332, D336, D390, N392, D394, D398, D448, D450, N452, Y454, and D456 together coordinate Ca(2+). Disulfide bonds link C495–C502, C508–C571, C637–C643, C736–C747, C894–C948, and C955–C960. An N-linked (GlcNAc...) asparagine glycan is attached at N741. Positions 905 to 916 (VDSRDRRRRELG) are enriched in basic and acidic residues. The tract at residues 905–933 (VDSRDRRRRELGQPEPQEPPEKVEPSTSW) is disordered. Residue N943 is glycosylated (N-linked (GlcNAc...) asparagine). N-linked (GlcNAc...) asparagine glycans are attached at residues N979 and N999. A helical transmembrane segment spans residues 1037–1057 (WVILLAVLAGLLVLALLVLLL). The Cytoplasmic portion of the chain corresponds to 1058-1135 (WKLGFFKRAK…PDGHPVSVTA (78 aa)). The short motif at 1061 to 1065 (GFFKR) is the GFFKR motif element. 3 consecutive repeat copies span residues 1111 to 1114 (DAHP), 1119 to 1122 (DWHP), and 1127 to 1130 (DGHP). The segment at 1111–1130 (DAHPILAADWHPELGPDGHP) is 3 X 4 AA repeats of D-X-H-P.

It belongs to the integrin alpha chain family. As to quaternary structure, interacts (via C-terminus intracellular tail region) with CIB1; the interaction is stabilized/increased in a calcium- and magnesium-dependent manner. Heterodimer of an alpha and a beta subunit. The alpha subunit is composed of a heavy and a light chain linked by a disulfide bond. Alpha-7 associates with beta-1. Interacts with COMP. In terms of processing, ADP-ribosylated on at least two sites of the extracellular domain in skeletal myotubes. A 70 kDa form is created by proteolytic cleavage. Cleavage is elevated during myogenic differentiation and the cleaved form enhances cell adhesion and spreading on laminin. In terms of tissue distribution, expressed in skeletal and cardiac muscle. Expressed in replicating myoblasts. In differentiated muscle fibers localizes between fibers and the surrounding matrix. Isoform Alpha-7X1A and isoform Alpha-7X1B are expressed at myotendinous and neuromuscular junctions; isoform Alpha-7X1C is expressed at neuromuscular junctions and at extrasynaptic sites.

Its subcellular location is the membrane. Its function is as follows. Integrin alpha-7/beta-1 is the primary laminin receptor on skeletal myoblasts and adult myofibers. During myogenic differentiation, it may induce changes in the shape and mobility of myoblasts, and facilitate their localization at laminin-rich sites of secondary fiber formation. Involved in the maintenance of the myofibers cytoarchitecture as well as for their anchorage, viability and functional integrity. Required to promote contractile phenotype acquisition in differentiated airway smooth muscle (ASM) cells. Acts as a Schwann cell receptor for laminin-2. Acts as a receptor of COMP and mediates its effect on vascular smooth muscle cells (VSMCs) maturation. The polypeptide is Integrin alpha-7 (Itga7) (Rattus norvegicus (Rat)).